The primary structure comprises 480 residues: Pyruvate kinase (480 aa).

Arg-36 contributes to the substrate binding site. K(+) contacts are provided by Asn-38, Ser-40, and Asp-70. ATP is bound at residue 38–41; sequence NFSH. Positions 77 and 160 each coordinate ATP. Glu-225 is a binding site for Mg(2+). Residues Gly-251, Asp-252, and Thr-284 each coordinate substrate. Mg(2+) is bound at residue Asp-252.

This sequence belongs to the pyruvate kinase family. In terms of assembly, homotetramer. Requires Mg(2+) as cofactor. It depends on K(+) as a cofactor.

The enzyme catalyses pyruvate + ATP = phosphoenolpyruvate + ADP + H(+). The protein operates within carbohydrate degradation; glycolysis; pyruvate from D-glyceraldehyde 3-phosphate: step 5/5. With respect to regulation, allosterically activated by AMP and by several sugar phosphates. Belongs to type II PK. The protein is Pyruvate kinase (pykA) of Buchnera aphidicola subsp. Acyrthosiphon pisum (strain APS) (Acyrthosiphon pisum symbiotic bacterium).